The chain runs to 227 residues: MENLDEVQWRSPEWIQAHQGLRTDNVLDYFAESPFYDRVSNNQVLRMQTQFNQQQTGQLTPQHFEQELQKMTGIEFVITHVREPDLWVIKKQNRLNPQQTTPISTYFVINENVYMAPTVAAIMQSRVLSTSMFLKRALEEAIELPSYSPSQGYTYEDSQLTTAGDDDSTPQASKAELGLLERSFRAAISGQQKYVSDIAPISSQSESAASSVPGTPVLKGRKLPLKK.

A compositionally biased stretch (polar residues) spans 149 to 162; that stretch reads PSQGYTYEDSQLTT. 2 disordered regions span residues 149 to 172 and 204 to 227; these read PSQGYTYEDSQLTTAGDDDSTPQA and QSESAASSVPGTPVLKGRKLPLKK.

This sequence belongs to the Mediator complex subunit 6 family. As to quaternary structure, component of the Mediator complex.

It localises to the nucleus. Functionally, component of the Mediator complex, a coactivator involved in the regulated transcription of nearly all RNA polymerase II-dependent genes. Mediator functions as a bridge to convey information from gene-specific regulatory proteins to the basal RNA polymerase II transcription machinery. Mediator is recruited to promoters by direct interactions with regulatory proteins and serves as a scaffold for the assembly of a functional preinitiation complex with RNA polymerase II and the general transcription factors. The protein is Mediator of RNA polymerase II transcription subunit 6 (MED6) of Yarrowia lipolytica (strain CLIB 122 / E 150) (Yeast).